Consider the following 156-residue polypeptide: ATP synthase subunit b (156 aa).

The chain crosses the membrane as a helical span at residues 3–23; it reads ITFTIFAQSLAFAALIWIVAT.

The protein belongs to the ATPase B chain family. In terms of assembly, F-type ATPases have 2 components, F(1) - the catalytic core - and F(0) - the membrane proton channel. F(1) has five subunits: alpha(3), beta(3), gamma(1), delta(1), epsilon(1). F(0) has three main subunits: a(1), b(2) and c(10-14). The alpha and beta chains form an alternating ring which encloses part of the gamma chain. F(1) is attached to F(0) by a central stalk formed by the gamma and epsilon chains, while a peripheral stalk is formed by the delta and b chains.

The protein localises to the cell inner membrane. Functionally, f(1)F(0) ATP synthase produces ATP from ADP in the presence of a proton or sodium gradient. F-type ATPases consist of two structural domains, F(1) containing the extramembraneous catalytic core and F(0) containing the membrane proton channel, linked together by a central stalk and a peripheral stalk. During catalysis, ATP synthesis in the catalytic domain of F(1) is coupled via a rotary mechanism of the central stalk subunits to proton translocation. Component of the F(0) channel, it forms part of the peripheral stalk, linking F(1) to F(0). The protein is ATP synthase subunit b of Xylella fastidiosa (strain M23).